The chain runs to 37 residues: Large ribosomal subunit protein bL36c (37 aa).

The protein belongs to the bacterial ribosomal protein bL36 family.

The protein localises to the plastid. It is found in the chloroplast. This is Large ribosomal subunit protein bL36c from Pelargonium hortorum (Common geranium).